We begin with the raw amino-acid sequence, 342 residues long: S-adenosylmethionine:tRNA ribosyltransferase-isomerase (342 aa).

Belongs to the QueA family. In terms of assembly, monomer.

The protein resides in the cytoplasm. The enzyme catalyses 7-aminomethyl-7-carbaguanosine(34) in tRNA + S-adenosyl-L-methionine = epoxyqueuosine(34) in tRNA + adenine + L-methionine + 2 H(+). It participates in tRNA modification; tRNA-queuosine biosynthesis. Functionally, transfers and isomerizes the ribose moiety from AdoMet to the 7-aminomethyl group of 7-deazaguanine (preQ1-tRNA) to give epoxyqueuosine (oQ-tRNA). This chain is S-adenosylmethionine:tRNA ribosyltransferase-isomerase, found in Streptococcus pyogenes serotype M3 (strain ATCC BAA-595 / MGAS315).